The chain runs to 858 residues: Leucine--tRNA ligase (858 aa).

Residues 42–52 (PYPSGNLHMGH) carry the 'HIGH' region motif. Residues 584–594 (NPNRSDSSRYI) are compositionally biased toward polar residues. Residues 584–611 (NPNRSDSSRYIPSNLVDPNDPKDPETGE) form a disordered region. The 'KMSKS' region motif lies at 619–623 (TMSKS). Lys-622 contacts ATP.

The protein belongs to the class-I aminoacyl-tRNA synthetase family.

The protein resides in the cytoplasm. It catalyses the reaction tRNA(Leu) + L-leucine + ATP = L-leucyl-tRNA(Leu) + AMP + diphosphate. This chain is Leucine--tRNA ligase, found in Cyanothece sp. (strain PCC 7425 / ATCC 29141).